Reading from the N-terminus, the 441-residue chain is Histidine--tRNA ligase (441 aa).

It belongs to the class-II aminoacyl-tRNA synthetase family. As to quaternary structure, homodimer.

Its subcellular location is the cytoplasm. It catalyses the reaction tRNA(His) + L-histidine + ATP = L-histidyl-tRNA(His) + AMP + diphosphate + H(+). This is Histidine--tRNA ligase from Koribacter versatilis (strain Ellin345).